The following is a 122-amino-acid chain: Large ribosomal subunit protein uL14 (122 aa).

The protein belongs to the universal ribosomal protein uL14 family. As to quaternary structure, part of the 50S ribosomal subunit. Forms a cluster with proteins L3 and L19. In the 70S ribosome, L14 and L19 interact and together make contacts with the 16S rRNA in bridges B5 and B8.

Binds to 23S rRNA. Forms part of two intersubunit bridges in the 70S ribosome. This chain is Large ribosomal subunit protein uL14, found in Protochlamydia amoebophila (strain UWE25).